A 284-amino-acid chain; its full sequence is D-tagatose-1,6-bisphosphate aldolase subunit GatY (284 aa).

The active-site Proton donor is aspartate 82. Histidine 83 and histidine 180 together coordinate Zn(2+). Glycine 181 contributes to the dihydroxyacetone phosphate binding site. Residue histidine 208 coordinates Zn(2+). Dihydroxyacetone phosphate is bound by residues 209-211 (GAS) and 230-233 (NVAT).

This sequence belongs to the class II fructose-bisphosphate aldolase family. TagBP aldolase GatY subfamily. In terms of assembly, forms a complex with GatZ. Zn(2+) is required as a cofactor.

The enzyme catalyses D-tagatofuranose 1,6-bisphosphate = D-glyceraldehyde 3-phosphate + dihydroxyacetone phosphate. The protein operates within carbohydrate metabolism; D-tagatose 6-phosphate degradation; D-glyceraldehyde 3-phosphate and glycerone phosphate from D-tagatose 6-phosphate: step 2/2. Catalytic subunit of the tagatose-1,6-bisphosphate aldolase GatYZ, which catalyzes the reversible aldol condensation of dihydroxyacetone phosphate (DHAP or glycerone-phosphate) with glyceraldehyde 3-phosphate (G3P) to produce tagatose 1,6-bisphosphate (TBP). Requires GatZ subunit for full activity and stability. Is involved in the catabolism of galactitol. This is D-tagatose-1,6-bisphosphate aldolase subunit GatY from Escherichia coli O139:H28 (strain E24377A / ETEC).